The primary structure comprises 306 residues: Acetyl-coenzyme A carboxylase carboxyl transferase subunit beta (306 aa).

The CoA carboxyltransferase N-terminal domain occupies 25 to 294; the sequence is LWIKCPETGE…TVVGANDDKT (270 aa).

Belongs to the AccD/PCCB family. Acetyl-CoA carboxylase is a heterohexamer composed of biotin carboxyl carrier protein (AccB), biotin carboxylase (AccC) and two subunits each of ACCase subunit alpha (AccA) and ACCase subunit beta (AccD).

It is found in the cytoplasm. It catalyses the reaction N(6)-carboxybiotinyl-L-lysyl-[protein] + acetyl-CoA = N(6)-biotinyl-L-lysyl-[protein] + malonyl-CoA. It functions in the pathway lipid metabolism; malonyl-CoA biosynthesis; malonyl-CoA from acetyl-CoA: step 1/1. Functionally, component of the acetyl coenzyme A carboxylase (ACC) complex. Biotin carboxylase (BC) catalyzes the carboxylation of biotin on its carrier protein (BCCP) and then the CO(2) group is transferred by the transcarboxylase to acetyl-CoA to form malonyl-CoA. This Allorhizobium ampelinum (strain ATCC BAA-846 / DSM 112012 / S4) (Agrobacterium vitis (strain S4)) protein is Acetyl-coenzyme A carboxylase carboxyl transferase subunit beta.